Consider the following 106-residue polypeptide: UPF0145 protein PputGB1_2909 (106 aa).

It belongs to the UPF0145 family.

The polypeptide is UPF0145 protein PputGB1_2909 (Pseudomonas putida (strain GB-1)).